A 155-amino-acid polypeptide reads, in one-letter code: MRIGLGYDVHKLVENRPLIIGGVTIPHDKGLLGHSDADVLVHAIMDALLGAAALGDIGKHFPDSDKNFKNISSLLLLSKVKDLINKEGYKIVNIDCTIIAQKPKMLYHIDAMKKNICKCLKLDNNMLNIKATTEEGLGFTGKEEGISANAICLLD.

2 residues coordinate a divalent metal cation: Asp8 and His10. 4-CDP-2-C-methyl-D-erythritol 2-phosphate is bound by residues 8 to 10 and 34 to 35; these read DVH and HS. His42 is an a divalent metal cation binding site. Residues 56–58, 61–65, 100–106, 132–135, Phe139, and Lys142 each bind 4-CDP-2-C-methyl-D-erythritol 2-phosphate; these read DIG, FPDSD, AQKPKML, and TTEE.

It belongs to the IspF family. In terms of assembly, homotrimer. Requires a divalent metal cation as cofactor.

It catalyses the reaction 4-CDP-2-C-methyl-D-erythritol 2-phosphate = 2-C-methyl-D-erythritol 2,4-cyclic diphosphate + CMP. It participates in isoprenoid biosynthesis; isopentenyl diphosphate biosynthesis via DXP pathway; isopentenyl diphosphate from 1-deoxy-D-xylulose 5-phosphate: step 4/6. Functionally, involved in the biosynthesis of isopentenyl diphosphate (IPP) and dimethylallyl diphosphate (DMAPP), two major building blocks of isoprenoid compounds. Catalyzes the conversion of 4-diphosphocytidyl-2-C-methyl-D-erythritol 2-phosphate (CDP-ME2P) to 2-C-methyl-D-erythritol 2,4-cyclodiphosphate (ME-CPP) with a corresponding release of cytidine 5-monophosphate (CMP). This is 2-C-methyl-D-erythritol 2,4-cyclodiphosphate synthase from Clostridium botulinum (strain ATCC 19397 / Type A).